A 144-amino-acid chain; its full sequence is Hemoglobin embryonic subunit alpha (144 aa).

Residues 3–144 enclose the Globin domain; it reads SLSAKDKDVV…LALALAEKYR (142 aa). Histidine 61 provides a ligand contact to O2. Histidine 90 contacts heme b.

It belongs to the globin family. Heterotetramer of two alpha chains and two beta chains. In terms of tissue distribution, red blood cells.

Involved in oxygen transport from gills to the various peripheral tissues. This Oryzias latipes (Japanese rice fish) protein is Hemoglobin embryonic subunit alpha.